A 521-amino-acid chain; its full sequence is Vang-like protein 2-B (521 aa).

Residues 1–18 (MDNDSQYSGYSYKSGQSR) show a composition bias toward low complexity. Residues 1 to 73 (MDNDSQYSGY…RDDNWGETTT (73 aa)) are disordered. Residues 1–108 (MDNDSQYSGY…AKLDCSRHLG (108 aa)) lie on the Cytoplasmic side of the membrane. Basic residues predominate over residues 19 to 33 (SSRKHRDRRERHRSK). Positions 57 to 67 (ESTRGEDRDDN) are enriched in basic and acidic residues. The chain crosses the membrane as a helical span at residues 109 to 129 (VVIAGALALLSFLTPIAFMLL). The Extracellular portion of the chain corresponds to 130–147 (PQILWREDLEQCGTACEG). A helical transmembrane segment spans residues 148–168 (LFISVAFKLLILLLGSWALFF). Over 169 to 178 (RRPKAFFPRV) the chain is Cytoplasmic. A helical membrane pass occupies residues 179-199 (FVFRALLMVLVFLLVVSYWLF). Over 200 to 218 (YGVRILESRDKNYQGIVQY) the chain is Extracellular. The chain crosses the membrane as a helical span at residues 219-239 (AVSLVDALLFVHYLAVVLLEL). At 240–521 (RQLQPQFTIK…VMRLQSETSV (282 aa)) the chain is on the cytoplasmic side. The PDZ-binding motif lies at 518–521 (ETSV).

It belongs to the Vang family. As to quaternary structure, interacts with dvl/dsh. Interacts with prickle3. As to expression, during gastrulation, broadly expressed in the dorsal region in both mesodermal and neural tissues. From the neurula stages, expressed throughout the neural tube. In tailbud stages, expression declines in the anterior notochord but remains strong in the posterior notochord and in the neural tube. Also weakly expressed in the prenephritic region of late tailbud embryos.

The protein localises to the cell membrane. Has a role in non-canonical Wnt/planar cell polarity (PCP) signaling; can recruit dvl/dsh and prickle from the cytoplasm to the plasma membrane. Acts in a PCP complex to regulate the polarized assembly of fibronectrin on the surface of the mesoderm during gastrulation. Regulates convergent extension in both dorsal mesoderm and neural tissue without affecting cell fate. Regulates neural fold closure during neurulation. May be required for cell surface localization of fzd3 and fzd6 in the inner ear. The sequence is that of Vang-like protein 2-B (vangl2-b) from Xenopus laevis (African clawed frog).